Consider the following 224-residue polypeptide: UPF0758 protein AFE_0358 (224 aa).

The MPN domain maps to 102-224; it reads GLDSPLRVRQ…PLSLREQGGW (123 aa). Zn(2+)-binding residues include His173, His175, and Asp186. The JAMM motif motif lies at 173 to 186; that stretch reads HNHPSGVAEPSAAD.

The protein belongs to the UPF0758 family.

The polypeptide is UPF0758 protein AFE_0358 (Acidithiobacillus ferrooxidans (strain ATCC 23270 / DSM 14882 / CIP 104768 / NCIMB 8455) (Ferrobacillus ferrooxidans (strain ATCC 23270))).